We begin with the raw amino-acid sequence, 190 residues long: Hypoxanthine/guanine phosphoribosyltransferase (190 aa).

Belongs to the purine/pyrimidine phosphoribosyltransferase family. Archaeal HPRT subfamily. As to quaternary structure, homodimer.

It localises to the cytoplasm. The catalysed reaction is IMP + diphosphate = hypoxanthine + 5-phospho-alpha-D-ribose 1-diphosphate. It catalyses the reaction GMP + diphosphate = guanine + 5-phospho-alpha-D-ribose 1-diphosphate. It functions in the pathway purine metabolism; IMP biosynthesis via salvage pathway; IMP from hypoxanthine: step 1/1. Catalyzes a salvage reaction resulting in the formation of IMP that is energically less costly than de novo synthesis. The polypeptide is Hypoxanthine/guanine phosphoribosyltransferase (Methanohalobium evestigatum (strain ATCC BAA-1072 / DSM 3721 / NBRC 107634 / OCM 161 / Z-7303)).